Reading from the N-terminus, the 507-residue chain is Putative UDP-glucuronosyltransferase ugt-60 (507 aa).

The first 15 residues, 1 to 15, serve as a signal peptide directing secretion; that stretch reads MYLPIFCIFLSVVDS. Asn312 carries N-linked (GlcNAc...) asparagine glycosylation. Residues 379-399 traverse the membrane as a helical segment; the sequence is YNSFLEAAQAGIPAVLMPLFA.

This sequence belongs to the UDP-glycosyltransferase family.

It is found in the membrane. The enzyme catalyses glucuronate acceptor + UDP-alpha-D-glucuronate = acceptor beta-D-glucuronoside + UDP + H(+). The protein is Putative UDP-glucuronosyltransferase ugt-60 (ugt-60) of Caenorhabditis elegans.